The chain runs to 241 residues: Carboxy-S-adenosyl-L-methionine synthase (241 aa).

S-adenosyl-L-methionine-binding positions include Tyr38, 63–65 (GCS), 88–89 (DN), 116–117 (DI), Asn131, and Arg198.

Belongs to the class I-like SAM-binding methyltransferase superfamily. Cx-SAM synthase family. Homodimer.

The enzyme catalyses prephenate + S-adenosyl-L-methionine = carboxy-S-adenosyl-L-methionine + 3-phenylpyruvate + H2O. Functionally, catalyzes the conversion of S-adenosyl-L-methionine (SAM) to carboxy-S-adenosyl-L-methionine (Cx-SAM). The protein is Carboxy-S-adenosyl-L-methionine synthase of Haemophilus influenzae (strain ATCC 51907 / DSM 11121 / KW20 / Rd).